We begin with the raw amino-acid sequence, 149 residues long: Large ribosomal subunit protein bL9 (149 aa).

It belongs to the bacterial ribosomal protein bL9 family.

Binds to the 23S rRNA. The chain is Large ribosomal subunit protein bL9 from Xanthomonas campestris pv. campestris (strain 8004).